The primary structure comprises 327 residues: ATP-dependent 6-phosphofructokinase (327 aa).

G12 contacts ATP. ADP is bound by residues 22–26 (RGVVR) and 55–60 (RYSVSD). ATP contacts are provided by residues 73–74 (RF) and 103–106 (GDGS). A Mg(2+)-binding site is contributed by D104. Residue 127–129 (TID) coordinates substrate. The active-site Proton acceptor is the D129. Residue R156 participates in ADP binding. Substrate is bound by residues R164 and 171–173 (MGR). Residues 187-189 (GCE), K213, and 215-217 (KKH) contribute to the ADP site. Residues E224, R245, and 251-254 (HIQR) contribute to the substrate site.

This sequence belongs to the phosphofructokinase type A (PFKA) family. ATP-dependent PFK group I subfamily. Prokaryotic clade 'B1' sub-subfamily. Homotetramer. The cofactor is Mg(2+).

Its subcellular location is the cytoplasm. It carries out the reaction beta-D-fructose 6-phosphate + ATP = beta-D-fructose 1,6-bisphosphate + ADP + H(+). Its pathway is carbohydrate degradation; glycolysis; D-glyceraldehyde 3-phosphate and glycerone phosphate from D-glucose: step 3/4. With respect to regulation, allosterically activated by ADP and other diphosphonucleosides, and allosterically inhibited by phosphoenolpyruvate. Functionally, catalyzes the phosphorylation of D-fructose 6-phosphate to fructose 1,6-bisphosphate by ATP, the first committing step of glycolysis. The polypeptide is ATP-dependent 6-phosphofructokinase (Yersinia pseudotuberculosis serotype IB (strain PB1/+)).